The following is a 107-amino-acid chain: Multidrug resistance protein mmr (107 aa).

4 helical membrane-spanning segments follow: residues 2–19, 29–51, 58–80, and 84–106; these read TYLF…ATSL, LWPT…VSIS, VAYA…LFLG, and SVTK…LTGA.

Belongs to the drug/metabolite transporter (DMT) superfamily. Small multidrug resistance (SMR) (TC 2.A.7.1) family. Mmr subfamily.

It localises to the cell membrane. Its function is as follows. Multidrug efflux pump. Confers resistance to tetraphenylphosphonium (TPP), erythromycin, ethidium bromide, acriflavine, safranin O and pyronin Y. The polypeptide is Multidrug resistance protein mmr (mmr) (Mycolicibacterium paratuberculosis (strain ATCC BAA-968 / K-10) (Mycobacterium paratuberculosis)).